We begin with the raw amino-acid sequence, 509 residues long: Zinc finger CCCH-type with G patch domain-containing protein (509 aa).

A C3H1-type zinc finger spans residues 155–178 (PCNYYLEGECRFDEIRCRYSHGAL). Residues 253–277 (EEDGLTSEDSSSSPHDESSDEIDSD) form a disordered region. In terms of domain architecture, G-patch spans 310–356 (TRGIGSKLMEKMGYIHGTGLGSEGRGIVTPVSAQILPQGRSLDACME). The segment at 409 to 430 (GGESRHQGDQAAKKAKTNDLQQ) is disordered. The segment covering 411–420 (ESRHQGDQAA) has biased composition (basic and acidic residues).

It is found in the nucleus. Transcription repressor. This chain is Zinc finger CCCH-type with G patch domain-containing protein, found in Drosophila persimilis (Fruit fly).